Reading from the N-terminus, the 485-residue chain is Efflux pump bik6 (485 aa).

The next 6 helical transmembrane spans lie at 42 to 62 (VYTTALWALTTCWITFASAIY), 86 to 106 (LLIFGFALGPMLWAPLCEVYG), 108 to 128 (KWPALAPYFISAAFAFGTATA), 139 to 159 (FFAGVFGSSPISITGGSIVDI), 172 to 192 (YGITIAAAPTLGPIIGGAFIA), and 199 to 219 (WTEYLTGIVMMVQFVLDALWL). Residue asparagine 241 is glycosylated (N-linked (GlcNAc...) asparagine). A run of 6 helical transmembrane segments spans residues 269–289 (MLLDPICLLLTIYTSFVYAIL), 306–326 (WGPVVSQLPFLSLLIGCLFAA), 353–373 (LPPMMVGGFAFSAGLFLFGWT), 379–399 (SSPWPSIIGVFLTGVGFTTIF), 417–437 (AIAANTFVRSMAAGAFPLFVW), and 447–467 (WGSTIFACISVLLLPAPFLFF).

The protein belongs to the major facilitator superfamily.

The protein localises to the membrane. In terms of biological role, efflux pump; part of the gene cluster that mediates the biosynthesis of bikaverin, a red pigment also considered as a mycotoxin. The sequence is that of Efflux pump bik6 from Gibberella fujikuroi (strain CBS 195.34 / IMI 58289 / NRRL A-6831) (Bakanae and foot rot disease fungus).